The following is a 654-amino-acid chain: Import motor subunit, mitochondrial (654 aa).

The transit peptide at 1–23 (MLAAKNILNRSSLSSSFRIATRL) directs the protein to the mitochondrion. Thr-330 is modified (phosphothreonine). The interval 629 to 654 (EQLYKNDSNNNNNNNGNNAESGETKQ) is disordered. Positions 637–646 (NNNNNNNGNN) are enriched in low complexity.

This sequence belongs to the heat shock protein 70 family. In terms of assembly, component of the PAM complex, at least composed of SSC1 (mtHsp70), MGE1, TIM44, PAM16/TIM16, PAM17 and PAM18/TIM14. In the complex, SSC1 interacts directly with PAM18 and TIM44. Interacts with NAP1.

The protein localises to the mitochondrion matrix. The catalysed reaction is ATP + H2O = ADP + phosphate + H(+). Functionally, essential component of the PAM complex, a complex required for the translocation of transit peptide-containing proteins from the inner membrane into the mitochondrial matrix in an ATP-dependent manner. Constitutes the ATP-driven core of the motor and binds the precursor preprotein. Required for the import of the processed frataxin homolog YFH1 into the mitochondrion. The protein is Import motor subunit, mitochondrial of Saccharomyces cerevisiae (strain ATCC 204508 / S288c) (Baker's yeast).